Here is a 230-residue protein sequence, read N- to C-terminus: Antiholin-like protein LrgB (230 aa).

8 consecutive transmembrane segments (helical) span residues 5–25, 30–50, 61–81, 92–112, 126–146, 149–169, 177–197, and 209–229; these read MTPY…TLLF, GFFL…FLKV, GGKM…IPLY, WQIL…VYIV, MLPQ…IGGI, ITSF…ALFL, PIAK…AVGI, and IAVT…MPFI.

This sequence belongs to the CidB/LrgB family. LrgB subfamily.

The protein localises to the cell membrane. Inhibits the expression or activity of extracellular murein hydrolases by interacting, possibly with LrgA, with the holin-like protein CidA. The LrgAB and CidA proteins may affect the proton motive force of the membrane. May be involved in programmed cell death (PCD), possibly triggering PCD in response to antibiotics and environmental stresses. The polypeptide is Antiholin-like protein LrgB (Bacillus mycoides (strain KBAB4) (Bacillus weihenstephanensis)).